The chain runs to 627 residues: uncharacterized protein (627 aa).

Residues 1-32 are Extracellular-facing; sequence MVDDSNYLTPHETALAVVATAMKKARLQLDTL. A helical membrane pass occupies residues 33–53; that stretch reads LINSILGGVLFSSGSFLLVAV. Over 54-66 the chain is Cytoplasmic; it reads YSEDPDIVARNPG. A helical membrane pass occupies residues 67 to 87; sequence IVNLITGVNFAMGLFYVVMMG. The Extracellular portion of the chain corresponds to 88–113; it reads ADLFNSNILFFSVGVLRKAVTIYDLM. Residues 114–134 form a helical membrane-spanning segment; it reads ISWVVSWLGNIAGSLFVSYLF. Topologically, residues 135 to 165 are cytoplasmic; it reads GHLSGISSQKLWIIGSRQIIEQKVSYSFVQT. A helical membrane pass occupies residues 166–186; that stretch reads FLKGIACNFFVCLAIYLQLMA. Residues 187–192 lie on the Extracellular side of the membrane; sequence KPIHVK. The chain crosses the membrane as a helical span at residues 193 to 213; it reads FILMSFPIIDFIGIGFTHVVG. The Cytoplasmic portion of the chain corresponds to 214–218; that stretch reads DMSAS. The chain crosses the membrane as a helical span at residues 219-239; that stretch reads FIAMLNGANVSVGKYIWKLLI. The Extracellular segment spans residues 240–245; the sequence is PASLGN. The chain crosses the membrane as a helical span at residues 246–266; sequence IVGGLFFSAVVPFYLHLVVVE. Topologically, residues 267–627 are cytoplasmic; the sequence is RDRKRLSLPE…FYNRHTSPQL (361 aa). Residue Thr305 is modified to Phosphothreonine. The interval 512–537 is disordered; that stretch reads PPILPRTTQDTFPHNAPASSPAYTDD. A compositionally biased stretch (polar residues) spans 517–533; sequence RTTQDTFPHNAPASSPA. The residue at position 546 (Ser546) is a Phosphoserine. At Thr588 the chain carries Phosphothreonine. Over residues 605–614 the composition is skewed to basic and acidic residues; the sequence is STTRRQKITE. Residues 605–627 form a disordered region; it reads STTRRQKITEPKNFYNRHTSPQL.

This sequence belongs to the FNT transporter (TC 1.A.16) family.

It is found in the membrane. This is an uncharacterized protein from Saccharomyces cerevisiae (strain ATCC 204508 / S288c) (Baker's yeast).